A 546-amino-acid polypeptide reads, in one-letter code: Peptidoglycan transport ATP-binding protein YejF (546 aa).

ABC transporter domains lie at 12 to 261 and 291 to 530; these read VRDL…RHLL and IKAG…KALL. ATP contacts are provided by residues 46-53 and 323-330; these read GESGSGKS and GESGSGKT.

It belongs to the ABC transporter superfamily. As to quaternary structure, the complex is composed of one ATP-binding protein (YejF), two transmembrane proteins (YejB and YejE) and a solute-binding protein (YepA or YejA).

The protein localises to the cell inner membrane. Functionally, part of the ABC transporter complex YejBEF-YepA involved in the uptake of muropeptides, the breakdown products of cell wall peptidoglycan. The import of muropeptides into the cell enables peptidoglycan recycling, which is vital for cell wall integrity in this bacterium. Is also probably part of the ABC transporter complex YejABEF, which is likely involved in broad-spectrum peptide import. Responsible for energy coupling to the transport system. This chain is Peptidoglycan transport ATP-binding protein YejF, found in Agrobacterium fabrum (strain C58 / ATCC 33970) (Agrobacterium tumefaciens (strain C58)).